Reading from the N-terminus, the 562-residue chain is Cytosolic invertase 1 (562 aa).

The protein belongs to the glycosyl hydrolase 100 family.

The protein resides in the cytoplasm. The protein localises to the cytosol. The catalysed reaction is Hydrolysis of terminal non-reducing beta-D-fructofuranoside residues in beta-D-fructofuranosides.. Its function is as follows. Cytosolic invertase that cleaves sucrose into glucose and fructose and is involved in the regulation of primary root elongation, lateral root formation, floral transition and pollen development. The polypeptide is Cytosolic invertase 1 (Oryza sativa subsp. japonica (Rice)).